The following is a 240-amino-acid chain: E3 ubiquitin-protein ligase LubX (240 aa).

U-box domains follow at residues 30–103 (TTPT…QTNY) and 125–198 (EIPD…RKRE).

In terms of processing, ubiquitinated in the presence of host E1 ubiquitin-activating enzyme, E2 ubiquitin-conjugating enzyme and ubiquitin.

It localises to the secreted. The protein resides in the host cell. The catalysed reaction is S-ubiquitinyl-[E2 ubiquitin-conjugating enzyme]-L-cysteine + [acceptor protein]-L-lysine = [E2 ubiquitin-conjugating enzyme]-L-cysteine + N(6)-ubiquitinyl-[acceptor protein]-L-lysine.. Effector proteins function to alter host cell physiology and promote bacterial survival in host tissues. This protein is an E3 ubiquitin ligase that interferes with host's ubiquitination pathway. The chain is E3 ubiquitin-protein ligase LubX (lubX) from Legionella pneumophila (strain Paris).